Consider the following 430-residue polypeptide: Dynactin subunit 2 (430 aa).

Disordered regions lie at residues Met1–Ser51 and Ser201–Ser228. A compositionally biased stretch (polar residues) spans Ser32–Val44. Coiled-coil stretches lie at residues Thr241–Thr319 and Asp397–Gln430.

This sequence belongs to the dynactin subunit 2 family. Subunit of dynactin, a multiprotein complex associated with dynein.

The protein localises to the cytoplasm. Its subcellular location is the cytoskeleton. It is found in the membrane. In terms of biological role, modulates cytoplasmic dynein binding to an organelle, and plays a role in prometaphase chromosome alignment and spindle organization during mitosis. This chain is Dynactin subunit 2 (dynB), found in Dictyostelium discoideum (Social amoeba).